Here is a 171-residue protein sequence, read N- to C-terminus: MTKWFNVGKIVNTHGVKGEIRVISRTDFPEERYKVGNTLYIWDEKGTDYLTVKVTSHRQHKTFDLLTLEGYNNVDEVEKLKGSLIKVPEEQLGELAEGEYYYHEIIGCNVVTEEGEALGTIKEILSPGANDVWVIKRPKGQDLLIPYIDDVVLQVNIENKLVTIHVMEGLL.

Positions 96-170 (AEGEYYYHEI…LVTIHVMEGL (75 aa)) constitute a PRC barrel domain.

Belongs to the RimM family. Binds ribosomal protein uS19.

It localises to the cytoplasm. An accessory protein needed during the final step in the assembly of 30S ribosomal subunit, possibly for assembly of the head region. Essential for efficient processing of 16S rRNA. May be needed both before and after RbfA during the maturation of 16S rRNA. It has affinity for free ribosomal 30S subunits but not for 70S ribosomes. This is Ribosome maturation factor RimM from Bacillus mycoides (strain KBAB4) (Bacillus weihenstephanensis).